Consider the following 1368-residue polypeptide: DNA-directed RNA polymerase subunit beta (1368 aa).

It belongs to the RNA polymerase beta chain family. The RNAP catalytic core consists of 2 alpha, 1 beta, 1 beta' and 1 omega subunit. When a sigma factor is associated with the core the holoenzyme is formed, which can initiate transcription.

It catalyses the reaction RNA(n) + a ribonucleoside 5'-triphosphate = RNA(n+1) + diphosphate. Functionally, DNA-dependent RNA polymerase catalyzes the transcription of DNA into RNA using the four ribonucleoside triphosphates as substrates. The protein is DNA-directed RNA polymerase subunit beta of Legionella pneumophila (strain Paris).